Reading from the N-terminus, the 764-residue chain is 5-methyltetrahydropteroyltriglutamate--homocysteine methyltransferase (764 aa).

Residues 16–19 (RELK) and Lys112 each bind 5-methyltetrahydropteroyltri-L-glutamate. L-homocysteine is bound by residues 431-433 (IGS) and Glu484. Residues 431–433 (IGS) and Glu484 each bind L-methionine. 5-methyltetrahydropteroyltri-L-glutamate contacts are provided by residues 515 to 516 (RC) and Trp561. An L-homocysteine-binding site is contributed by Asp599. Asp599 contacts L-methionine. 5-methyltetrahydropteroyltri-L-glutamate is bound at residue Glu605. Residues His641, Cys643, and Glu665 each coordinate Zn(2+). The active-site Proton donor is the His694. Cys726 serves as a coordination point for Zn(2+).

It belongs to the vitamin-B12 independent methionine synthase family. Zn(2+) is required as a cofactor.

The enzyme catalyses 5-methyltetrahydropteroyltri-L-glutamate + L-homocysteine = tetrahydropteroyltri-L-glutamate + L-methionine. It participates in amino-acid biosynthesis; L-methionine biosynthesis via de novo pathway; L-methionine from L-homocysteine (MetE route): step 1/1. Catalyzes the transfer of a methyl group from 5-methyltetrahydrofolate to homocysteine resulting in methionine formation. In Paraburkholderia xenovorans (strain LB400), this protein is 5-methyltetrahydropteroyltriglutamate--homocysteine methyltransferase.